We begin with the raw amino-acid sequence, 175 residues long: Cytochrome c homolog (175 aa).

Residues methionine 1–lysine 8 are Cytoplasmic-facing. Residues isoleucine 9 to isoleucine 29 traverse the membrane as a helical; Signal-anchor segment. Residues leucine 30 to lysine 175 lie on the Periplasmic side of the membrane. The heme c site is built by cysteine 84, cysteine 87, histidine 88, and methionine 150.

This sequence belongs to the cytochrome c family. Post-translationally, binds 1 heme c group covalently per subunit.

It localises to the cell membrane. In terms of biological role, may be involved in electron transfer from bc1 complex to aa3. This Rickettsia typhi (strain ATCC VR-144 / Wilmington) protein is Cytochrome c homolog (cycM).